Consider the following 393-residue polypeptide: Formate-dependent phosphoribosylglycinamide formyltransferase (393 aa).

Residues 22–23 (EL) and Glu82 contribute to the N(1)-(5-phospho-beta-D-ribosyl)glycinamide site. ATP is bound by residues Arg114, Lys155, 160–165 (SSGKGQ), 195–198 (EGFI), and Glu203. In terms of domain architecture, ATP-grasp spans 119–308 (RLAAEELKLP…QFALHARAIL (190 aa)). Mg(2+)-binding residues include Glu267 and Glu279. Residues Asp286, Lys356, and 363 to 364 (RR) contribute to the N(1)-(5-phospho-beta-D-ribosyl)glycinamide site.

The protein belongs to the PurK/PurT family. In terms of assembly, homodimer.

The enzyme catalyses N(1)-(5-phospho-beta-D-ribosyl)glycinamide + formate + ATP = N(2)-formyl-N(1)-(5-phospho-beta-D-ribosyl)glycinamide + ADP + phosphate + H(+). It functions in the pathway purine metabolism; IMP biosynthesis via de novo pathway; N(2)-formyl-N(1)-(5-phospho-D-ribosyl)glycinamide from N(1)-(5-phospho-D-ribosyl)glycinamide (formate route): step 1/1. Functionally, involved in the de novo purine biosynthesis. Catalyzes the transfer of formate to 5-phospho-ribosyl-glycinamide (GAR), producing 5-phospho-ribosyl-N-formylglycinamide (FGAR). Formate is provided by PurU via hydrolysis of 10-formyl-tetrahydrofolate. The protein is Formate-dependent phosphoribosylglycinamide formyltransferase of Pseudomonas syringae pv. tomato (strain ATCC BAA-871 / DC3000).